The chain runs to 188 residues: Threonylcarbamoyl-AMP synthase (188 aa).

The YrdC-like domain maps to 3–188 (QLSSTQVTPV…RSGLVLRNGQ (186 aa)).

It belongs to the SUA5 family. TsaC subfamily.

Its subcellular location is the cytoplasm. The enzyme catalyses L-threonine + hydrogencarbonate + ATP = L-threonylcarbamoyladenylate + diphosphate + H2O. Functionally, required for the formation of a threonylcarbamoyl group on adenosine at position 37 (t(6)A37) in tRNAs that read codons beginning with adenine. Catalyzes the conversion of L-threonine, HCO(3)(-)/CO(2) and ATP to give threonylcarbamoyl-AMP (TC-AMP) as the acyladenylate intermediate, with the release of diphosphate. This Shewanella denitrificans (strain OS217 / ATCC BAA-1090 / DSM 15013) protein is Threonylcarbamoyl-AMP synthase.